A 168-amino-acid chain; its full sequence is uncharacterized protein (168 aa).

Residues 1–166 form the PfpI endopeptidase domain; it reads MRVLILAENE…FCGELIKILK (166 aa).

It belongs to the peptidase C56 family.

This is an uncharacterized protein from Archaeoglobus fulgidus (strain ATCC 49558 / DSM 4304 / JCM 9628 / NBRC 100126 / VC-16).